Here is a 420-residue protein sequence, read N- to C-terminus: Serine hydroxymethyltransferase (420 aa).

(6S)-5,6,7,8-tetrahydrofolate is bound by residues leucine 121 and 125–127; that span reads GHL. Lysine 230 is modified (N6-(pyridoxal phosphate)lysine). (6S)-5,6,7,8-tetrahydrofolate contacts are provided by residues glutamate 246 and 354-356; that span reads SPF.

It belongs to the SHMT family. As to quaternary structure, homodimer. Pyridoxal 5'-phosphate is required as a cofactor.

It is found in the cytoplasm. The enzyme catalyses (6R)-5,10-methylene-5,6,7,8-tetrahydrofolate + glycine + H2O = (6S)-5,6,7,8-tetrahydrofolate + L-serine. It participates in one-carbon metabolism; tetrahydrofolate interconversion. It functions in the pathway amino-acid biosynthesis; glycine biosynthesis; glycine from L-serine: step 1/1. Catalyzes the reversible interconversion of serine and glycine with tetrahydrofolate (THF) serving as the one-carbon carrier. This reaction serves as the major source of one-carbon groups required for the biosynthesis of purines, thymidylate, methionine, and other important biomolecules. Also exhibits THF-independent aldolase activity toward beta-hydroxyamino acids, producing glycine and aldehydes, via a retro-aldol mechanism. This chain is Serine hydroxymethyltransferase, found in Rickettsia massiliae (strain Mtu5).